A 1402-amino-acid polypeptide reads, in one-letter code: Transcription factor SPT20 homolog (1402 aa).

Disordered regions lie at residues methionine 1–glutamine 29, valine 60–aspartate 107, asparagine 114–serine 133, glutamine 177–leucine 206, alanine 786–valine 817, proline 1136–threonine 1174, and glutamine 1199–isoleucine 1250. Basic and acidic residues predominate over residues valine 7–glutamine 29. Residues valine 60–glutamine 72 are compositionally biased toward polar residues. Residues asparagine 73 to asparagine 102 show a composition bias toward low complexity. 6 stretches are compositionally biased toward low complexity: residues asparagine 183–asparagine 204, alanine 786–threonine 812, proline 1136–glutamine 1150, serine 1157–threonine 1174, glutamine 1199–glutamine 1218, and proline 1226–isoleucine 1250.

It belongs to the SPT20 family.

In Dictyostelium discoideum (Social amoeba), this protein is Transcription factor SPT20 homolog.